The sequence spans 309 residues: Aromatic prenyltransferase (309 aa).

The protein belongs to the aromatic prenyltransferase family.

Its function is as follows. Prenyltransferase that attaches isoprenoid moieties to carbon atoms of aromatic substrates in an enzyme-catalyzed Friedel-Crafts reaction. Shows specificity for dimethylallyl diphosphate (DMAPP) and does not accept geranyl diphosphate (GPP) or isopentenyl diphosphate (IPP). Prenylates the artificial substrate 2,7-dihydroxynaphthalene (2,7-DHN), as well as dihydrophenazine-1-carboxylic acid and 4-hydroxybenzoic acid at lower levels. Only traces of products are detected with aspulvinone E or flaviolin as substrates; and no product is formed with L-tryptophan, L-tyrosine, or 4-hydroxyphenylpyruvate. Ptf seems no to be involved in the prenylation reaction in the biosynthesis of aspulvinone H and J and the physiological function of ptf remains unknown. In Botryotinia fuckeliana (strain B05.10) (Noble rot fungus), this protein is Aromatic prenyltransferase.